Here is a 355-residue protein sequence, read N- to C-terminus: Isopentenyl-diphosphate delta-isomerase (355 aa).

Residue 9-10 (RK) coordinates substrate. FMN contacts are provided by residues 67-69 (AIT), Ser-97, and Asn-125. A substrate-binding site is contributed by 97–99 (SQR). Gln-161 is a substrate binding site. A Mg(2+)-binding site is contributed by Glu-162. FMN-binding positions include Lys-197, Thr-227, 276–278 (GIR), and 297–298 (AL).

Belongs to the IPP isomerase type 2 family. In terms of assembly, homooctamer. Dimer of tetramers. FMN serves as cofactor. It depends on NADPH as a cofactor. Requires Mg(2+) as cofactor.

It localises to the cytoplasm. The catalysed reaction is isopentenyl diphosphate = dimethylallyl diphosphate. In terms of biological role, involved in the biosynthesis of isoprenoids. Catalyzes the 1,3-allylic rearrangement of the homoallylic substrate isopentenyl (IPP) to its allylic isomer, dimethylallyl diphosphate (DMAPP). The sequence is that of Isopentenyl-diphosphate delta-isomerase from Methanococcus maripaludis (strain DSM 14266 / JCM 13030 / NBRC 101832 / S2 / LL).